The sequence spans 1083 residues: Chitin synthase 2 (1083 aa).

2 stretches are compositionally biased toward basic and acidic residues: residues 1–10 (MSSEREERTF) and 18–30 (DDVR…ENQE). Disordered regions lie at residues 1-248 (MSSE…IADD) and 260-294 (DDDV…TLNE). Asparagine 23 is a glycosylation site (N-linked (GlcNAc...) asparagine). Polar residues-rich tracts occupy residues 38–49 (SYASSMAESQTL) and 61–70 (AKLQNKNRTS). N-linked (GlcNAc...) asparagine glycosylation is present at asparagine 67. 2 stretches are compositionally biased toward basic and acidic residues: residues 78 to 100 (LPRD…KEQQ) and 117 to 128 (RLRDVNSHDKLP). 3 stretches are compositionally biased toward polar residues: residues 132–148 (SPRN…SRSG), 177–191 (RPWT…FTRS), and 282–292 (SYMSSESQDTL). N-linked (GlcNAc...) asparagine glycosylation is present at asparagine 417. 8 helical membrane passes run 708–728 (WLNG…QIWF), 747–767 (FIQL…FYFV), 785–805 (TVIF…QFIL), 820–840 (ISMI…FYII), 860–880 (NMIV…ILYL), 889–909 (SAQY…YAFC), 987–1007 (YLVL…SEIY), and 1020–1040 (FLLW…TTFA).

Belongs to the chitin synthase family. Class II subfamily.

Its subcellular location is the cell membrane. It catalyses the reaction [(1-&gt;4)-N-acetyl-beta-D-glucosaminyl](n) + UDP-N-acetyl-alpha-D-glucosamine = [(1-&gt;4)-N-acetyl-beta-D-glucosaminyl](n+1) + UDP + H(+). Polymerizes chitin, a structural polymer of the cell wall and septum, by transferring the sugar moiety of UDP-GlcNAc to the non-reducing end of the growing chitin polymer. Plays a critical role in cell wall integrity and virulence. The polypeptide is Chitin synthase 2 (Fusarium oxysporum f. sp. lycopersici (strain 4287 / CBS 123668 / FGSC 9935 / NRRL 34936) (Fusarium vascular wilt of tomato)).